Reading from the N-terminus, the 332-residue chain is Small ribosomal subunit protein uS2 (332 aa).

Belongs to the universal ribosomal protein uS2 family.

The chain is Small ribosomal subunit protein uS2 from Nitrobacter hamburgensis (strain DSM 10229 / NCIMB 13809 / X14).